The primary structure comprises 150 residues: MRPGSTPASRRKSRPPRRVSPPLPTTSTRSPGRPSAPEQRKAPRATPKKRFRPGTRALMEIRKYQKSTELLIRKAPFSRLVREVCMTYACGLNYSWQSMALMALQEASEAFLVRLFEDSYLCSLHAKRVTLYVQDIQLARRIRGVTEGLG.

The tract at residues 1-56 (MRPGSTPASRRKSRPPRRVSPPLPTTSTRSPGRPSAPEQRKAPRATPKKRFRPGTR) is disordered. Low complexity predominate over residues 25–37 (TTSTRSPGRPSAP). The span at 42–53 (APRATPKKRFRP) shows a compositional bias: basic residues. The segment at 53 to 150 (PGTRALMEIR…RIRGVTEGLG (98 aa)) is H3-like.

The protein belongs to the histone H3 family. Component of centromeric nucleosomes, where DNA is wrapped around a histone octamer core. The octamer contains two molecules each of H2A, H2B, CENPA and H4 assembled in one CENPA-H4 heterotetramer and two H2A-H2B heterodimers. CENPA modulates the DNA-binding characteristics of nucleosomes so that protruding DNA ends have higher flexibility than in nucleosomes containing conventional histone H3.

The protein localises to the nucleus. It is found in the chromosome. Its subcellular location is the centromere. Functionally, histone H3-like nucleosomal protein that is specifically found in centromeric nucleosomes. Replaces conventional H3 in the nucleosome core of centromeric chromatin that serves as an assembly site for the inner kinetochore. The presence of CENPA subtly modifies the nucleosome structure and the way DNA is wrapped around the nucleosome and gives rise to protruding DNA ends that are less well-ordered and rigid compared to nucleosomes containing histone H3. May serve as an epigenetic mark that propagates centromere identity through replication and cell division. Required for recruitment and assembly of kinetochore proteins, and as a consequence required for progress through mitosis, chromosome segregation and cytokinesis. The polypeptide is Histone H3-like centromeric protein A (cenpa) (Xenopus tropicalis (Western clawed frog)).